Reading from the N-terminus, the 341-residue chain is Sulfate/thiosulfate import ATP-binding protein CysA 2 (341 aa).

The 233-residue stretch at 3-235 (IRLENVVKTF…PNSSFVMRFL (233 aa)) folds into the ABC transporter domain. 35–42 (GPSGSGKT) contacts ATP.

Belongs to the ABC transporter superfamily. Sulfate/tungstate importer (TC 3.A.1.6) family. In terms of assembly, the complex is composed of two ATP-binding proteins (CysA), two transmembrane proteins (CysT and CysW) and a solute-binding protein (CysP).

The protein localises to the cell inner membrane. The catalysed reaction is sulfate(out) + ATP + H2O = sulfate(in) + ADP + phosphate + H(+). The enzyme catalyses thiosulfate(out) + ATP + H2O = thiosulfate(in) + ADP + phosphate + H(+). Functionally, part of the ABC transporter complex CysAWTP involved in sulfate/thiosulfate import. Responsible for energy coupling to the transport system. The protein is Sulfate/thiosulfate import ATP-binding protein CysA 2 of Agrobacterium fabrum (strain C58 / ATCC 33970) (Agrobacterium tumefaciens (strain C58)).